Here is a 508-residue protein sequence, read N- to C-terminus: Photosystem II CP47 reaction center protein (508 aa).

Transmembrane regions (helical) follow at residues 21-36, 101-115, 140-156, 203-218, 237-252, and 457-472; these read SVHI…WAGS, IVFS…IWHW, GIHL…FGAF, IAAG…FHLS, VLSS…AFVV, and SFAL…HGAR.

It belongs to the PsbB/PsbC family. PsbB subfamily. In terms of assembly, PSII is composed of 1 copy each of membrane proteins PsbA, PsbB, PsbC, PsbD, PsbE, PsbF, PsbH, PsbI, PsbJ, PsbK, PsbL, PsbM, PsbT, PsbX, PsbY, PsbZ, Psb30/Ycf12, at least 3 peripheral proteins of the oxygen-evolving complex and a large number of cofactors. It forms dimeric complexes. Requires Binds multiple chlorophylls. PSII binds additional chlorophylls, carotenoids and specific lipids. as cofactor.

It is found in the plastid. Its subcellular location is the chloroplast thylakoid membrane. In terms of biological role, one of the components of the core complex of photosystem II (PSII). It binds chlorophyll and helps catalyze the primary light-induced photochemical processes of PSII. PSII is a light-driven water:plastoquinone oxidoreductase, using light energy to abstract electrons from H(2)O, generating O(2) and a proton gradient subsequently used for ATP formation. This chain is Photosystem II CP47 reaction center protein, found in Carica papaya (Papaya).